Consider the following 447-residue polypeptide: ATP-dependent protease ATPase subunit HslU (447 aa).

ATP is bound by residues isoleucine 17, 59-64, aspartate 256, glutamate 321, and arginine 393; that span reads GVGKTE.

The protein belongs to the ClpX chaperone family. HslU subfamily. In terms of assembly, a double ring-shaped homohexamer of HslV is capped on each side by a ring-shaped HslU homohexamer. The assembly of the HslU/HslV complex is dependent on binding of ATP.

The protein localises to the cytoplasm. Its function is as follows. ATPase subunit of a proteasome-like degradation complex; this subunit has chaperone activity. The binding of ATP and its subsequent hydrolysis by HslU are essential for unfolding of protein substrates subsequently hydrolyzed by HslV. HslU recognizes the N-terminal part of its protein substrates and unfolds these before they are guided to HslV for hydrolysis. The protein is ATP-dependent protease ATPase subunit HslU of Pseudomonas putida (strain W619).